We begin with the raw amino-acid sequence, 253 residues long: Triosephosphate isomerase (253 aa).

Substrate contacts are provided by asparagine 12 and lysine 14. Histidine 96 functions as the Electrophile in the catalytic mechanism. Glutamate 169 serves as the catalytic Proton acceptor.

It belongs to the triosephosphate isomerase family. As to quaternary structure, homodimer.

It is found in the cytoplasm. The enzyme catalyses D-glyceraldehyde 3-phosphate = dihydroxyacetone phosphate. It participates in carbohydrate biosynthesis; gluconeogenesis. It functions in the pathway carbohydrate degradation; glycolysis; D-glyceraldehyde 3-phosphate from glycerone phosphate: step 1/1. In terms of biological role, antigen to the host M.1 monoclonal antibody. This chain is Triosephosphate isomerase (TPI), found in Schistosoma mansoni (Blood fluke).